Consider the following 378-residue polypeptide: Cytochrome b (378 aa).

The next 4 membrane-spanning stretches (helical) occupy residues 33–53 (FGSLLGLCLVAQILTGLFLAM), 77–98 (WLIRNLHANGASFFFLCLYLHI), 113–133 (WNTGILLLLLIMVTAFVGYVL), and 178–198 (FFAFHFFIPFIATAVVALHFL). The heme b site is built by H83 and H97. Heme b is bound by residues H182 and H196. A ubiquinone is bound at residue H201. The next 4 helical transmembrane spans lie at 226-246 (YKDLLGFLLLLAPLTALAVFS), 288-308 (LGGVLALLASILVLAVVPFLH), 320-340 (WSQLCLFTLVVTVLILTWIGG), and 347-367 (LTTVGQIASLLYFTIILFLMP).

Belongs to the cytochrome b family. The cytochrome bc1 complex contains 3 respiratory subunits (MT-CYB, CYC1 and UQCRFS1), 2 core proteins (UQCRC1 and UQCRC2) and probably 6 low-molecular weight proteins. Requires heme b as cofactor.

It localises to the mitochondrion inner membrane. Functionally, component of the ubiquinol-cytochrome c reductase complex (complex III or cytochrome b-c1 complex) that is part of the mitochondrial respiratory chain. The b-c1 complex mediates electron transfer from ubiquinol to cytochrome c. Contributes to the generation of a proton gradient across the mitochondrial membrane that is then used for ATP synthesis. The chain is Cytochrome b (mt-cyb) from Indostomus paradoxus (Armoured stickleback).